We begin with the raw amino-acid sequence, 284 residues long: MEAIKKKMTMLKLDKENAIDRAEQAETDKKSAEDKATGLEEELQGLQKRLKATEDELDTSQEKLRTAIENLENAEKKAADAEQEVASLNRRITLVEEELDRAQERLTISLSKLEEAEKAADESERGRKVIENRSLKDEERLEVQEIQLTEAKNIAEDADRKYVEVARKLVMVEAELERGEERAELAESKAIELEEELKIVANNLKSLEASAEKYAAKEGIFEEEIKTLSDKLKDSETRAEFAEKSVVKLEKNIDELEDSLYAEKCKIKAISEDMDVTLQGIGDL.

Residues 1–284 (MEAIKKKMTM…DVTLQGIGDL (284 aa)) adopt a coiled-coil conformation. A disordered region spans residues 18-38 (AIDRAEQAETDKKSAEDKATG).

It belongs to the tropomyosin family. Homodimer. In terms of tissue distribution, predominantly expressed in body wall muscle and heart, low in intestine, ovary and larval tail muscle.

Functionally, the function of tropomyosin in smooth muscle and non-muscle cells is not clear. The chain is Tropomyosin, smooth muscle/fibroblast CTM1 (CTM1) from Ciona intestinalis (Transparent sea squirt).